Reading from the N-terminus, the 245-residue chain is uncharacterized protein (245 aa).

Positions 1–19 (MKLTQFISYAILSLSGVQA) are cleaved as a signal peptide.

Its subcellular location is the secreted. This is an uncharacterized protein from Arthroderma benhamiae (strain ATCC MYA-4681 / CBS 112371) (Trichophyton mentagrophytes).